A 201-amino-acid chain; its full sequence is 3-isopropylmalate dehydratase small subunit (201 aa).

This sequence belongs to the LeuD family. LeuD type 1 subfamily. In terms of assembly, heterodimer of LeuC and LeuD.

The catalysed reaction is (2R,3S)-3-isopropylmalate = (2S)-2-isopropylmalate. The protein operates within amino-acid biosynthesis; L-leucine biosynthesis; L-leucine from 3-methyl-2-oxobutanoate: step 2/4. In terms of biological role, catalyzes the isomerization between 2-isopropylmalate and 3-isopropylmalate, via the formation of 2-isopropylmaleate. The chain is 3-isopropylmalate dehydratase small subunit from Escherichia coli O127:H6 (strain E2348/69 / EPEC).